The primary structure comprises 311 residues: Coproporphyrin III ferrochelatase 1 (311 aa).

Residues tyrosine 12, arginine 29, 45–46 (RY), serine 53, and tyrosine 124 each bind Fe-coproporphyrin III. 2 residues coordinate Fe(2+): histidine 182 and glutamate 263.

The protein belongs to the ferrochelatase family.

The protein resides in the cytoplasm. The catalysed reaction is Fe-coproporphyrin III + 2 H(+) = coproporphyrin III + Fe(2+). The protein operates within porphyrin-containing compound metabolism; protoheme biosynthesis. Functionally, involved in coproporphyrin-dependent heme b biosynthesis. Catalyzes the insertion of ferrous iron into coproporphyrin III to form Fe-coproporphyrin III. This Bacillus cereus (strain ATCC 10987 / NRS 248) protein is Coproporphyrin III ferrochelatase 1.